A 302-amino-acid polypeptide reads, in one-letter code: 33 kDa chaperonin (302 aa).

Cystine bridges form between C234-C236 and C267-C270.

Belongs to the HSP33 family. Post-translationally, under oxidizing conditions two disulfide bonds are formed involving the reactive cysteines. Under reducing conditions zinc is bound to the reactive cysteines and the protein is inactive.

The protein localises to the cytoplasm. Redox regulated molecular chaperone. Protects both thermally unfolding and oxidatively damaged proteins from irreversible aggregation. Plays an important role in the bacterial defense system toward oxidative stress. The sequence is that of 33 kDa chaperonin from Neisseria meningitidis serogroup A / serotype 4A (strain DSM 15465 / Z2491).